A 489-amino-acid polypeptide reads, in one-letter code: Acetylcholine receptor subunit beta (489 aa).

Residues 1-20 (NSGALLWPLIWGLLLIGTQA) form the signal peptide. Topologically, residues 21 to 235 (LDKEAQLRDK…ITFYLVIQRK (215 aa)) are extracellular. Asparagine 135 and asparagine 161 each carry an N-linked (GlcNAc...) asparagine glycan. Cysteine 148 and cysteine 162 are disulfide-bonded. 3 helical membrane-spanning segments follow: residues 236 to 260 (PLFYIVNVIVPCILITILAIFVFYL), 268 to 286 (MTLSIFALLTLTVFLLLLA), and 302 to 323 (YLIFTMTLVTFSVIFSVVVLNL). The Cytoplasmic portion of the chain corresponds to 324-457 (HHRSPNTHHM…WQYVAMVVDR (134 aa)). Residues 458 to 476 (LFLWTFIAFTSLGTLSIFL) traverse the membrane as a helical segment.

Belongs to the ligand-gated ion channel (TC 1.A.9) family. Acetylcholine receptor (TC 1.A.9.1) subfamily. Beta-1/CHRNB1 sub-subfamily. Pentamer of two alpha chains, and one each of the beta, delta, and gamma (in immature muscle) or epsilon (in mature muscle) chains.

It is found in the postsynaptic cell membrane. Its subcellular location is the cell membrane. The enzyme catalyses K(+)(in) = K(+)(out). It catalyses the reaction Na(+)(in) = Na(+)(out). Its function is as follows. After binding acetylcholine, the AChR responds by an extensive change in conformation that affects all subunits and leads to opening of an ion-conducting channel across the plasma membrane. The chain is Acetylcholine receptor subunit beta (chrnb1) from Xenopus laevis (African clawed frog).